Here is a 341-residue protein sequence, read N- to C-terminus: Cathepsin B-like cysteine proteinase 1 (341 aa).

A signal peptide spans 1–19 (MKYLFFALCLYLYQGISEA). Positions 20-88 (EVPAEQIPLE…VEDEELEENN (69 aa)) are cleaved as a propeptide — activation peptide. Asparagine 103 carries N-linked (GlcNAc...) asparagine glycosylation. Intrachain disulfides connect cysteine 104/cysteine 133, cysteine 116/cysteine 160, cysteine 152/cysteine 218, cysteine 153/cysteine 156, cysteine 189/cysteine 222, and cysteine 197/cysteine 209. Cysteine 119 is a catalytic residue. Asparagine 202 is a glycosylation site (N-linked (GlcNAc...) asparagine). Catalysis depends on residues histidine 288 and asparagine 308.

This sequence belongs to the peptidase C1 family.

In terms of biological role, expression of the protease correlates with blood-feeding and suggests a role for the protease in blood digestion. This Ostertagia ostertagi (Brown stomach worm) protein is Cathepsin B-like cysteine proteinase 1 (CP-1).